A 2623-amino-acid chain; its full sequence is Probable polyketide synthase 31 (2623 aa).

Residues 1-11 (MTQNIDNNNNK) are compositionally biased toward low complexity. The disordered stretch occupies residues 1–25 (MTQNIDNNNNKLIRDRNDDDDVDRN). Residues 27-461 (DGDVAVIGIG…GSNVCLILSE (435 aa)) enclose the Ketosynthase family 3 (KS3) domain. Active-site for beta-ketoacyl synthase activity residues include Cys199, His338, and His384. Residues 666–699 (GVSADIIIGHSLGEVSSPYCSGMIDFQTLCYLIY) form an acyl/malonyl transferase region. Ser676 (for acyl/malonyl transferase activity) is an active-site residue. The segment at 959-1088 (HEKIKSEGPS…GNFNLTKHNS (130 aa)) is N-terminal hotdog fold. One can recognise a PKS/mFAS DH domain in the interval 959-1267 (HEKIKSEGPS…CALVSLGSNP (309 aa)). His1000 (proton acceptor; for dehydratase activity) is an active-site residue. A C-terminal hotdog fold region spans residues 1105–1267 (NFTSISKQDF…CALVSLGSNP (163 aa)). Asp1177 acts as the Proton donor; for dehydratase activity in catalysis. The region spanning 2524 to 2601 (ANNEIIHSTI…QSIEIIKSAK (78 aa)) is the Carrier domain. Position 2561 is an O-(pantetheine 4'-phosphoryl)serine (Ser2561). The disordered stretch occupies residues 2600 to 2623 (AKNNNKNNNNNNNKNNSNNKNKNN). The segment covering 2601-2623 (KNNNKNNNNNNNKNNSNNKNKNN) has biased composition (low complexity).

It depends on pantetheine 4'-phosphate as a cofactor.

Its function is as follows. Probable polyketide synthase. The protein is Probable polyketide synthase 31 (pks31) of Dictyostelium discoideum (Social amoeba).